Consider the following 159-residue polypeptide: Ribosomal RNA large subunit methyltransferase H (159 aa).

S-adenosyl-L-methionine is bound by residues Leu76, Gly108, and 127 to 132; that span reads FSKMTF.

Belongs to the RNA methyltransferase RlmH family. In terms of assembly, homodimer.

The protein resides in the cytoplasm. The catalysed reaction is pseudouridine(1915) in 23S rRNA + S-adenosyl-L-methionine = N(3)-methylpseudouridine(1915) in 23S rRNA + S-adenosyl-L-homocysteine + H(+). Its function is as follows. Specifically methylates the pseudouridine at position 1915 (m3Psi1915) in 23S rRNA. This Bifidobacterium longum (strain DJO10A) protein is Ribosomal RNA large subunit methyltransferase H.